Reading from the N-terminus, the 208-residue chain is MTDQTIVKMNAELRNSVGTGPSRTLRRNGAIPAVVYGKHRSPLSIYLSDREFLSKYRSAALSTHLIELEIGEKKEYVLMRDIQKHPVTDRIQHVDFQFIDHGTEIKIEVPLVFVNEQRCVGVKKGGVLNILHRTLHIKCLPNAILQSIEVDLANLTIGHSIHVSDLNLPSEVTVVMKEHNPTLVTISGTSSDQDTSGGESSGTTTSED.

A disordered region spans residues 184–208; the sequence is VTISGTSSDQDTSGGESSGTTTSED. Residues 187 to 208 are compositionally biased toward low complexity; the sequence is SGTSSDQDTSGGESSGTTTSED.

It belongs to the bacterial ribosomal protein bL25 family. CTC subfamily. Part of the 50S ribosomal subunit; part of the 5S rRNA/L5/L18/L25 subcomplex. Contacts the 5S rRNA. Binds to the 5S rRNA independently of L5 and L18.

Its function is as follows. This is one of the proteins that binds to the 5S RNA in the ribosome where it forms part of the central protuberance. The sequence is that of Large ribosomal subunit protein bL25 from Ehrlichia ruminantium (strain Gardel).